A 504-amino-acid chain; its full sequence is Acetylcholine receptor subunit epsilon (504 aa).

The N-terminal stretch at 1–19 (MESGVRILSLLILLHNSLA) is a signal peptide. Residues 20–240 (SESEESRLIK…IVFNLIIQRK (221 aa)) lie on the Extracellular side of the membrane. 2 N-linked (GlcNAc...) asparagine glycosylation sites follow: N88 and N161. C148 and C162 form a disulfide bridge. The helical transmembrane segment at 241-265 (PLFYIINIIVPCVLISFLVVLVYFL) threads the bilayer. The Cytoplasmic portion of the chain corresponds to 266–273 (PAKAGGQK). Residues 274–292 (CTVSISVLLAQTVFLFLIA) traverse the membrane as a helical segment. The Extracellular segment spans residues 293-307 (QMVPETSLSVPLIGK). A helical transmembrane segment spans residues 308–329 (YLMFVMFVSTLIVLSCVIVLNV). The Cytoplasmic segment spans residues 330 to 473 (SLRSPSTHNL…WILIGKVLDV (144 aa)). A helical transmembrane segment spans residues 474 to 497 (LCFWVALPLFVLGTLAIFLMGHFN). The Extracellular portion of the chain corresponds to 498-504 (TAPEHPF).

This sequence belongs to the ligand-gated ion channel (TC 1.A.9) family. Acetylcholine receptor (TC 1.A.9.1) subfamily. Epsilon/CHRNE sub-subfamily. In terms of assembly, pentamer of two alpha chains, and one each of the beta, delta, and gamma (in immature muscle) or epsilon (in mature muscle) chains.

The protein localises to the postsynaptic cell membrane. The protein resides in the cell membrane. It carries out the reaction K(+)(in) = K(+)(out). The catalysed reaction is Na(+)(in) = Na(+)(out). Its function is as follows. After binding acetylcholine, the AChR responds by an extensive change in conformation that affects all subunits and leads to opening of an ion-conducting channel across the plasma membrane. The protein is Acetylcholine receptor subunit epsilon (chrne) of Xenopus laevis (African clawed frog).